Consider the following 411-residue polypeptide: Tyrosine--tRNA ligase (411 aa).

Tyr-34 provides a ligand contact to L-tyrosine. Positions 39–48 (CTATSLHIGS) match the 'HIGH' region motif. 2 residues coordinate L-tyrosine: Tyr-171 and Gln-175. The 'KMSKS' region signature appears at 231-235 (KMGKT). Lys-234 serves as a coordination point for ATP. In terms of domain architecture, S4 RNA-binding spans 345–411 (ISAYELFHEA…GKKRHILVRV (67 aa)).

The protein belongs to the class-I aminoacyl-tRNA synthetase family. TyrS type 1 subfamily. Homodimer.

Its subcellular location is the cytoplasm. The catalysed reaction is tRNA(Tyr) + L-tyrosine + ATP = L-tyrosyl-tRNA(Tyr) + AMP + diphosphate + H(+). Catalyzes the attachment of tyrosine to tRNA(Tyr) in a two-step reaction: tyrosine is first activated by ATP to form Tyr-AMP and then transferred to the acceptor end of tRNA(Tyr). The chain is Tyrosine--tRNA ligase from Rickettsia africae (strain ESF-5).